Reading from the N-terminus, the 573-residue chain is 2-isopropylmalate synthase (573 aa).

A Pyruvate carboxyltransferase domain is found at 37-314; sequence PRWLSTDLRD…DPQIDFSNID (278 aa). Residues Asp46, His253, His255, and Asn289 each coordinate Mg(2+). The regulatory domain stretch occupies residues 456 to 573; sequence NPRNPWGRIQ…VVSAVNRAAR (118 aa).

It belongs to the alpha-IPM synthase/homocitrate synthase family. LeuA type 2 subfamily. Homodimer. Mg(2+) is required as a cofactor.

The protein resides in the cytoplasm. The catalysed reaction is 3-methyl-2-oxobutanoate + acetyl-CoA + H2O = (2S)-2-isopropylmalate + CoA + H(+). Its pathway is amino-acid biosynthesis; L-leucine biosynthesis; L-leucine from 3-methyl-2-oxobutanoate: step 1/4. Catalyzes the condensation of the acetyl group of acetyl-CoA with 3-methyl-2-oxobutanoate (2-ketoisovalerate) to form 3-carboxy-3-hydroxy-4-methylpentanoate (2-isopropylmalate). The polypeptide is 2-isopropylmalate synthase (Streptomyces avermitilis (strain ATCC 31267 / DSM 46492 / JCM 5070 / NBRC 14893 / NCIMB 12804 / NRRL 8165 / MA-4680)).